The following is a 447-amino-acid chain: Phosphoglucosamine mutase (447 aa).

Residue Ser-100 is the Phosphoserine intermediate of the active site. Ser-100, Asp-239, Asp-241, and Asp-243 together coordinate Mg(2+). The residue at position 100 (Ser-100) is a Phosphoserine.

This sequence belongs to the phosphohexose mutase family. Mg(2+) is required as a cofactor. In terms of processing, activated by phosphorylation.

It catalyses the reaction alpha-D-glucosamine 1-phosphate = D-glucosamine 6-phosphate. Its function is as follows. Catalyzes the conversion of glucosamine-6-phosphate to glucosamine-1-phosphate. The chain is Phosphoglucosamine mutase from Caldanaerobacter subterraneus subsp. tengcongensis (strain DSM 15242 / JCM 11007 / NBRC 100824 / MB4) (Thermoanaerobacter tengcongensis).